The following is a 298-amino-acid chain: Lipoyl synthase (298 aa).

Residues cysteine 43, cysteine 48, cysteine 54, cysteine 69, cysteine 73, cysteine 76, and serine 280 each contribute to the [4Fe-4S] cluster site. One can recognise a Radical SAM core domain in the interval 55–269 (FSSGTATFLI…AACGRGMGIP (215 aa)).

This sequence belongs to the radical SAM superfamily. Lipoyl synthase family. [4Fe-4S] cluster serves as cofactor.

The protein localises to the cytoplasm. The enzyme catalyses [[Fe-S] cluster scaffold protein carrying a second [4Fe-4S](2+) cluster] + N(6)-octanoyl-L-lysyl-[protein] + 2 oxidized [2Fe-2S]-[ferredoxin] + 2 S-adenosyl-L-methionine + 4 H(+) = [[Fe-S] cluster scaffold protein] + N(6)-[(R)-dihydrolipoyl]-L-lysyl-[protein] + 4 Fe(3+) + 2 hydrogen sulfide + 2 5'-deoxyadenosine + 2 L-methionine + 2 reduced [2Fe-2S]-[ferredoxin]. Its pathway is protein modification; protein lipoylation via endogenous pathway; protein N(6)-(lipoyl)lysine from octanoyl-[acyl-carrier-protein]: step 2/2. In terms of biological role, catalyzes the radical-mediated insertion of two sulfur atoms into the C-6 and C-8 positions of the octanoyl moiety bound to the lipoyl domains of lipoate-dependent enzymes, thereby converting the octanoylated domains into lipoylated derivatives. The sequence is that of Lipoyl synthase from Nitratidesulfovibrio vulgaris (strain ATCC 29579 / DSM 644 / CCUG 34227 / NCIMB 8303 / VKM B-1760 / Hildenborough) (Desulfovibrio vulgaris).